A 686-amino-acid chain; its full sequence is DNA ligase (686 aa).

NAD(+) is bound by residues 33–37 (DSVYD), 82–83 (SL), and glutamate 122. Lysine 124 acts as the N6-AMP-lysine intermediate in catalysis. The NAD(+) site is built by arginine 145, glutamate 182, lysine 300, and lysine 324. Residues cysteine 418, cysteine 421, cysteine 436, and cysteine 441 each contribute to the Zn(2+) site. The BRCT domain maps to 600 to 686 (AVSQILAGKK…PTVESGDLHP (87 aa)).

It belongs to the NAD-dependent DNA ligase family. LigA subfamily. Mg(2+) serves as cofactor. Requires Mn(2+) as cofactor.

The enzyme catalyses NAD(+) + (deoxyribonucleotide)n-3'-hydroxyl + 5'-phospho-(deoxyribonucleotide)m = (deoxyribonucleotide)n+m + AMP + beta-nicotinamide D-nucleotide.. Its function is as follows. DNA ligase that catalyzes the formation of phosphodiester linkages between 5'-phosphoryl and 3'-hydroxyl groups in double-stranded DNA using NAD as a coenzyme and as the energy source for the reaction. It is essential for DNA replication and repair of damaged DNA. The protein is DNA ligase of Synechococcus sp. (strain JA-2-3B'a(2-13)) (Cyanobacteria bacterium Yellowstone B-Prime).